We begin with the raw amino-acid sequence, 332 residues long: Methionine import ATP-binding protein MetN (332 aa).

One can recognise an ABC transporter domain in the interval 2 to 241; the sequence is IELKGLTKVF…PGSRLRELFY (240 aa). Position 38-45 (38-45) interacts with ATP; sequence GQSGAGKS.

The protein belongs to the ABC transporter superfamily. Methionine importer (TC 3.A.1.24) family. The complex is composed of two ATP-binding proteins (MetN), two transmembrane proteins (MetI) and a solute-binding protein (MetQ).

The protein resides in the cell membrane. The catalysed reaction is L-methionine(out) + ATP + H2O = L-methionine(in) + ADP + phosphate + H(+). It catalyses the reaction D-methionine(out) + ATP + H2O = D-methionine(in) + ADP + phosphate + H(+). Its function is as follows. Part of the ABC transporter complex MetNIQ involved in methionine import. Responsible for energy coupling to the transport system. In Symbiobacterium thermophilum (strain DSM 24528 / JCM 14929 / IAM 14863 / T), this protein is Methionine import ATP-binding protein MetN.